Consider the following 306-residue polypeptide: Porphobilinogen deaminase (306 aa).

Cys-237 is modified (S-(dipyrrolylmethanemethyl)cysteine).

The protein belongs to the HMBS family. In terms of assembly, monomer. The cofactor is dipyrromethane.

The catalysed reaction is 4 porphobilinogen + H2O = hydroxymethylbilane + 4 NH4(+). The protein operates within porphyrin-containing compound metabolism; protoporphyrin-IX biosynthesis; coproporphyrinogen-III from 5-aminolevulinate: step 2/4. Functionally, tetrapolymerization of the monopyrrole PBG into the hydroxymethylbilane pre-uroporphyrinogen in several discrete steps. The protein is Porphobilinogen deaminase of Syntrophus aciditrophicus (strain SB).